Here is a 74-residue protein sequence, read N- to C-terminus: Peptide BmKb1 (74 aa).

The first 22 residues, 1–22, serve as a signal peptide directing secretion; sequence MEIKYLLTVFLVLLIVSDHCQA. A Lysine amide modification is found at K40. The propeptide occupies 46–74; that stretch reads DLNGYIDHFKNFRKRDAELEELLSKLPIY.

The protein belongs to the non-disulfide-bridged peptide (NDBP) superfamily. Short antimicrobial peptide (group 4) family. As to expression, expressed by the venom gland.

The protein localises to the secreted. It localises to the target cell membrane. Has antibacterial activity against Gram-positive bacteria S.aureus, M.luteus, B.subtilis, and Gram-negative bacteria E.coli, and P.aeruginosa. The sequence is that of Peptide BmKb1 from Olivierus martensii (Manchurian scorpion).